Here is an 886-residue protein sequence, read N- to C-terminus: Desmocollin-1 (886 aa).

The first 29 residues, 1-29 (MAVACAAPGSTFSKQLLFFLLVLVLFCDA), serve as a signal peptide directing secretion. Residues 30–134 (CQKVSLHVPS…KEPVHNRSKR (105 aa)) constitute a propeptide that is removed on maturation. N-linked (GlcNAc...) asparagine glycosylation is found at Asn130 and Asn165. 5 consecutive Cadherin domains span residues 135–242 (RWAP…APYF), 243–354 (ETKL…SPYF), 355–471 (TQTS…GPEC), 472–575 (QPPV…DHPP), and 576–682 (QIDK…EERD). Residues 135–691 (RWAPIPCSLM…DAKPNIILGK (557 aa)) lie on the Extracellular side of the membrane. A Phosphothreonine modification is found at Thr385. N-linked (GlcNAc...) (high mannose) asparagine glycosylation occurs at Asn546. The N-linked (GlcNAc...) asparagine glycan is linked to Asn613. A helical transmembrane segment spans residues 692–714 (WAILAMVLGSALLLCILFTCFCV). Over 715 to 886 (TTTKRTVKKC…RTLAKTCVKK (172 aa)) the chain is Cytoplasmic.

Binds to JUP/plakoglobin. As to expression, expressed in the epidermis and inner root sheaths of hair follicles (at protein level).

It localises to the cell membrane. The protein resides in the cell junction. Its subcellular location is the desmosome. A component of desmosome cell-cell junctions which are required for positive regulation of cellular adhesion. Required for desmosome adhesion strength between the granular layers of the epidermis, as a result moderates epidermal proliferation and differentiation. Is therefore required to maintain postnatal epidermal barrier function and normal hair follicle morphology into adulthood. The protein is Desmocollin-1 (Dsc1) of Mus musculus (Mouse).